The following is a 174-amino-acid chain: uncharacterized protein (174 aa).

This is an uncharacterized protein from Dictyostelium discoideum (Social amoeba).